Consider the following 642-residue polypeptide: Terminase, large subunit (642 aa).

An interaction with the terminase small subunit region spans residues 1–48; sequence MISDAQKAANAAGAIATGLLSLIIPVPLTTVQWANKHYYLPKESSYTP. The Q motif signature appears at 42–51; that stretch reads KESSYTPGRW. The short motif at 76-83 is the Walker A motif element; the sequence is KSARVGYT. Residues 166–353 form a DNA packaging/ATPase region; that stretch reads NYREKSVDVV…LDALKDPNGL (188 aa). The Walker B motif signature appears at 174-179; it reads VVCYDE. The active-site For ATPase activity is the E179. D401 is a binding site for Mg(2+). The segment at 401-587 is endonuclease; sequence DSQRNRFEMY…LWDNKKRRNE (187 aa). 491-498 lines the ATP pocket; it reads GASVYGKP. Positions 574–585 are basic; that stretch reads KMRLLWDNKKRR. Positions 589-617 are leucine zipper; sequence LDCLVYAYAALRVSVQRWQLDLAVLAKSR. The interval 611-642 is prohead binding; that stretch reads AVLAKSREEETTRPTLKELAAKLSGGVNGYSR.

This sequence belongs to the lambdavirus large terminase family. As to quaternary structure, heterotrimer of two small and one large terminase subunits. The catalytically competent terminase is composed of a tetramer of heterotrimers. The tetramer forms a ring structure large enough to encircle duplex DNA. Host IHFA/IHFB induces bending of viral DNA to facilitate the assembly of the terminase tetramer of heterotrimers. Interacts (via N-terminus) with the terminase small subunit (via C-terminus). Interacts (via C-terminus) with the portal protein; this interaction allows the packaging of viral DNA. The cofactor is Mg(2+).

The protein resides in the host cytoplasm. It carries out the reaction Endonucleolytic cleavage of DNA to give specific double-stranded fragments with terminal 5'-phosphates.. Functionally, the terminase large subunit acts as an ATP driven molecular motor necessary for viral DNA translocation into empty capsids and as an endonuclease that cuts the viral genome from the concetamer to initiate and to end the packaging reaction. The terminase lies at a unique vertex of the procapsid and is composed of two subunits, a small terminase subunit involved in viral DNA recognition (binding to packaging sequence cos), and a large terminase subunit possessing endonucleolytic and ATPase activities (DNA maturation and packaging). The terminase binds cooperatively with the host factor IHFA/IHFB to the cos site at the junction of adjacent viral genomes. The endonuclease activity cleaves the viral DNA generating 5'overhangs of 12 bp in length. The strand separation activity separates the cohesive ends generating the single-stranded 'sticky' ends of the mature genome. IHFA/IHFB is also necessary for the strand separation activity of the terminase. The terminase remains bound to the left end of the genome to be packaged, forming a stable DNA-terminase complex. In a reaction facilitated by the viral assembly catalyst gpFI, the DNA-terminase complex binds to the portal of the procapsid thereby activating the translocase activity of the terminase. The terminase packages the viral DNA into the procapsid until the next cos site on the concatemer reaches the complex. The downstream cos site is then cut generating the mature right end of the genome, the heterotrimer undocks from the DNA-filled head and remains bound to the left end of concatemer's next genome. In Escherichia coli (Bacteriophage 21), this protein is Terminase, large subunit (2).